We begin with the raw amino-acid sequence, 213 residues long: Holliday junction resolvase RecU (213 aa).

Mg(2+) is bound by residues Thr99, Asp101, Glu114, and Gln133.

The protein belongs to the RecU family. Mg(2+) serves as cofactor.

It is found in the cytoplasm. It carries out the reaction Endonucleolytic cleavage at a junction such as a reciprocal single-stranded crossover between two homologous DNA duplexes (Holliday junction).. Endonuclease that resolves Holliday junction intermediates in genetic recombination. Cleaves mobile four-strand junctions by introducing symmetrical nicks in paired strands. Promotes annealing of linear ssDNA with homologous dsDNA. Required for DNA repair, homologous recombination and chromosome segregation. In Lactococcus lactis subsp. lactis (strain IL1403) (Streptococcus lactis), this protein is Holliday junction resolvase RecU.